The sequence spans 347 residues: Quinolinate synthase (347 aa).

His47 and Ser68 together coordinate iminosuccinate. [4Fe-4S] cluster is bound at residue Cys113. Iminosuccinate is bound by residues 139 to 141 and Ser156; that span reads YAN. Cys200 is a [4Fe-4S] cluster binding site. Iminosuccinate is bound by residues 226–228 and Thr243; that span reads HPE. Residue Cys297 participates in [4Fe-4S] cluster binding.

It belongs to the quinolinate synthase family. Type 1 subfamily. [4Fe-4S] cluster is required as a cofactor.

It localises to the cytoplasm. The catalysed reaction is iminosuccinate + dihydroxyacetone phosphate = quinolinate + phosphate + 2 H2O + H(+). It participates in cofactor biosynthesis; NAD(+) biosynthesis; quinolinate from iminoaspartate: step 1/1. Catalyzes the condensation of iminoaspartate with dihydroxyacetone phosphate to form quinolinate. The protein is Quinolinate synthase of Enterobacter sp. (strain 638).